The primary structure comprises 200 residues: Arylesterase (200 aa).

The N-terminal stretch at 1 to 19 (MIRLLSLVLFFCLSAASQA) is a signal peptide. Catalysis depends on S29, which acts as the Nucleophile. Catalysis depends on residues D176 and H179.

Belongs to the 'GDSL' lipolytic enzyme family. Homodimer.

The catalysed reaction is a phenyl acetate + H2O = a phenol + acetate + H(+). Favors the hydrolysis of several arylesters. This Vibrio mimicus protein is Arylesterase.